The following is a 403-amino-acid chain: Probable tRNA sulfurtransferase (403 aa).

The 106-residue stretch at 60-165 (QLAEERLKPI…KEGVFLSCRT (106 aa)) folds into the THUMP domain. ATP contacts are provided by residues 183-184 (ML), 208-209 (HF), Arg-265, Gly-287, and Gln-296.

It belongs to the ThiI family.

It localises to the cytoplasm. The catalysed reaction is [ThiI sulfur-carrier protein]-S-sulfanyl-L-cysteine + a uridine in tRNA + 2 reduced [2Fe-2S]-[ferredoxin] + ATP + H(+) = [ThiI sulfur-carrier protein]-L-cysteine + a 4-thiouridine in tRNA + 2 oxidized [2Fe-2S]-[ferredoxin] + AMP + diphosphate. It catalyses the reaction [ThiS sulfur-carrier protein]-C-terminal Gly-Gly-AMP + S-sulfanyl-L-cysteinyl-[cysteine desulfurase] + AH2 = [ThiS sulfur-carrier protein]-C-terminal-Gly-aminoethanethioate + L-cysteinyl-[cysteine desulfurase] + A + AMP + 2 H(+). Its pathway is cofactor biosynthesis; thiamine diphosphate biosynthesis. Catalyzes the ATP-dependent transfer of a sulfur to tRNA to produce 4-thiouridine in position 8 of tRNAs, which functions as a near-UV photosensor. Also catalyzes the transfer of sulfur to the sulfur carrier protein ThiS, forming ThiS-thiocarboxylate. This is a step in the synthesis of thiazole, in the thiamine biosynthesis pathway. The sulfur is donated as persulfide by IscS. This is Probable tRNA sulfurtransferase from Listeria monocytogenes serovar 1/2a (strain ATCC BAA-679 / EGD-e).